We begin with the raw amino-acid sequence, 2222 residues long: DNA polymerase epsilon catalytic subunit A (2222 aa).

The tract at residues Glu90–Thr110 is disordered. Zn(2+)-binding residues include Cys2108, Cys2111, Cys2130, and Cys2133. The segment at Cys2108–Cys2133 adopts a CysA-type zinc-finger fold. Positions 2164, 2167, 2179, and 2181 each coordinate [4Fe-4S] cluster. The short motif at Cys2164–Cys2181 is the CysB motif element.

This sequence belongs to the DNA polymerase type-B family. As to quaternary structure, DNA polymerase epsilon is a heterotetramer consisting of POL2, DPB2, DPB3 and DPB4. Requires [4Fe-4S] cluster as cofactor.

It localises to the nucleus. The enzyme catalyses DNA(n) + a 2'-deoxyribonucleoside 5'-triphosphate = DNA(n+1) + diphosphate. In terms of biological role, catalytic component of the DNA polymerase epsilon complex which participates in chromosomal DNA replication. Required during synthesis of the leading DNA strands at the replication fork, binds at/or near replication origins and moves along DNA with the replication fork. Has 3'-5' proofreading exonuclease activity that corrects errors arising during DNA replication. This chain is DNA polymerase epsilon catalytic subunit A (POL2), found in Saccharomyces cerevisiae (strain ATCC 204508 / S288c) (Baker's yeast).